A 636-amino-acid chain; its full sequence is Protein cueball (636 aa).

The signal sequence occupies residues 1–27; sequence MKLCTSQQFGVAVLFIVLNICSPLADA. The Extracellular portion of the chain corresponds to 28-517; it reads SPIAWDFAVT…ADGPSSLRSG (490 aa). Residues asparagine 83 and asparagine 109 are each glycosylated (N-linked (GlcNAc...) asparagine). LDL-receptor class B repeat units lie at residues 122-169, 170-214, and 215-260; these read RNLF…DICR, RQLY…DQLS, and DRIF…TEDT. An N-linked (GlcNAc...) asparagine glycan is attached at asparagine 190. 2 N-linked (GlcNAc...) asparagine glycosylation sites follow: asparagine 285 and asparagine 339. 2 consecutive EGF-like domains span residues 350–384 and 419–456; these read RMDA…ARCE and EYYK…TRCE. Cystine bridges form between cysteine 359–cysteine 372, cysteine 374–cysteine 383, cysteine 423–cysteine 433, cysteine 427–cysteine 444, and cysteine 446–cysteine 455. Asparagine 449, asparagine 458, and asparagine 493 each carry an N-linked (GlcNAc...) asparagine glycan. A helical membrane pass occupies residues 518–538; it reads SVIIVLVVGIVSSLALVAVIV. The Cytoplasmic segment spans residues 539–636; that stretch reads HGLRLIYKPK…IHNMEDDLLT (98 aa).

The protein belongs to the cueball family.

It localises to the cell membrane. Has a role in spermatogenesis and oogenesis. This Drosophila virilis (Fruit fly) protein is Protein cueball.